Consider the following 322-residue polypeptide: Cytochrome f (322 aa).

Residues 1–35 (MQTRNTFSWTWIREEITRSISVSLMIYIITWSSIS) form the signal peptide. 4 residues coordinate heme: Tyr-38, Cys-58, Cys-61, and His-62. A helical transmembrane segment spans residues 288–308 (VQGLLFFLGSVVLAQIFLVLK).

This sequence belongs to the cytochrome f family. The 4 large subunits of the cytochrome b6-f complex are cytochrome b6, subunit IV (17 kDa polypeptide, petD), cytochrome f and the Rieske protein, while the 4 small subunits are PetG, PetL, PetM and PetN. The complex functions as a dimer. Heme is required as a cofactor.

The protein resides in the plastid. It is found in the chloroplast thylakoid membrane. Its function is as follows. Component of the cytochrome b6-f complex, which mediates electron transfer between photosystem II (PSII) and photosystem I (PSI), cyclic electron flow around PSI, and state transitions. The polypeptide is Cytochrome f (Aethionema cordifolium (Lebanon stonecress)).